The following is a 680-amino-acid chain: Enzymatic polyprotein (680 aa).

A protease region spans residues 41-131; the sequence is LHCFVDTGAS…LYEPFIQFTD (91 aa). Aspartate 46 is a catalytic residue. One can recognise a Reverse transcriptase domain in the interval 273 to 453; that stretch reads LKVIKPSKSP…KKINFLGLEI (181 aa).

The protein belongs to the caulimoviridae enzymatic polyprotein family.

It carries out the reaction DNA(n) + a 2'-deoxyribonucleoside 5'-triphosphate = DNA(n+1) + diphosphate. In terms of biological role, encodes for at least two polypeptides: protease (PR) and reverse transcriptase (RT). The protease processes the polyprotein in cis. Reverse transcriptase is multifunctional enzyme that converts the viral RNA genome into dsDNA in viral cytoplasmic capsids. This enzyme displays a DNA polymerase activity that can copy either DNA or RNA templates, and a ribonuclease H (RNase H) activity that cleaves the RNA strand of RNA-DNA heteroduplexes in a partially processive 3'- to 5'-endonucleasic mode. Neo-synthesized pregenomic RNA (pgRNA) are encapsidated, and reverse-transcribed inside the nucleocapsid. Partial (+)DNA is synthesized from the (-)DNA template and generates the relaxed circular DNA (RC-DNA) genome. After budding and infection, the RC-DNA migrates in the nucleus, and is converted into a plasmid-like covalently closed circular DNA (cccDNA). The chain is Enzymatic polyprotein from Cauliflower mosaic virus (strain NY8153) (CaMV).